The sequence spans 889 residues: Mitochondrial intermediate peptidase (889 aa).

A mitochondrion-targeting transit peptide spans 1–30 (MASTSKNAQRAAASVAHSYHVCLARRMSRL). The disordered stretch occupies residues 60–112 (SSSLAAQRVQRPTSAGPILTNPISDHEKDNDELRSLFDAPPTSSSANHLRSSG). Over residues 83 to 94 (SDHEKDNDELRS) the composition is skewed to basic and acidic residues. Over residues 100–112 (PTSSSANHLRSSG) the composition is skewed to polar residues. His-670 provides a ligand contact to Zn(2+). Residue Glu-671 is part of the active site. 2 residues coordinate Zn(2+): His-674 and His-677.

Belongs to the peptidase M3 family. Requires Zn(2+) as cofactor.

The protein resides in the mitochondrion matrix. The catalysed reaction is Release of an N-terminal octapeptide as second stage of processing of some proteins imported into the mitochondrion.. Functionally, cleaves proteins, imported into the mitochondrion, to their mature size. While most mitochondrial precursor proteins are processed to the mature form in one step by mitochondrial processing peptidase (MPP), the sequential cleavage by MIP of an octapeptide after initial processing by MPP is a required step for a subgroup of nuclear-encoded precursor proteins destined for the matrix or the inner membrane. The chain is Mitochondrial intermediate peptidase (OCT1) from Mycosarcoma maydis (Corn smut fungus).